The chain runs to 770 residues: MPYVGVGAQKASTNLTGGPMMKAYAFVLAFFLLGLGVLALGKHHSGRRFNQYSKVSIDDIHETDAKTIQDNIKSENIKKYLRIFTQEPHIAGTDANKKVAYAIASAWTEAGLEDVHTLPYEVLLSYPDFENPNSVVIQNSAGKEIFRSKGVSPVIIPDEQSGKYAGHQWLAYGGNGTVSADVVYINRGNANDFKNLKLMGVDVKGKIALMRYGHGFRGDKVYKAQQAGAIGAILFSDTSDVAQDGVDSEHVYPKTIWMPNEGVQRGSLMHGDGDPLSPFYPSKKELFKGRTIEEAKDDGTLPSIPVLPVSYTTALQLLKRMSGRAVPSDWQGFVGGNLTYKLGPGFVNGEKLTINVHSELKTKRIRNVIGYIRGAEEPDRYIMLGNHFDAWVYGSIDPNSGTAVLAEVARAMMQTINETSWRPARTIVFNAWDAEEFGLIGSTEFVEEFVDVLQKRAVVYINMDCIQGNASLHVDTVPTLEHIAIEAAKHVPNPSKRERSRGRNTVYDTWMKVFPEKKAGRPKIRVPGGGSDHAPFLNFAGVPVINFNYKNYTTFDTYPLYHSMYETPFTNIHLMDTEDLAVHRAIGQYWAELAKTFADEVVLPMNTTNLASVMIKSYLPQLKASISGINVSRIDFESIRTQYALLSKSSQDLLVMSKKFQETMQFTFHSFSQNPYDAKHVNAVNERLISTERCFINPRGVSKHNPSARHVLFSVSDSDSYSNSLMAGIQNAIHSYETSPSKKNLREIINQISTVQYSVICVVNTLRDVI.

The Cytoplasmic portion of the chain corresponds to 1–19 (MPYVGVGAQKASTNLTGGP). The helical; Signal-anchor for type II membrane protein transmembrane segment at 20 to 40 (MMKAYAFVLAFFLLGLGVLAL) threads the bilayer. At 41 to 770 (GKHHSGRRFN…CVVNTLRDVI (730 aa)) the chain is on the extracellular side. 2 N-linked (GlcNAc...) asparagine glycosylation sites follow: asparagine 175 and asparagine 337. A catalytic region spans residues 282–597 (SKKELFKGRT…QYWAELAKTF (316 aa)). Positions 387 and 397 each coordinate Zn(2+). N-linked (GlcNAc...) asparagine glycosylation occurs at asparagine 417. The active-site Nucleophile is the glutamate 435. Residues glutamate 436 and aspartate 464 each coordinate Zn(2+). N-linked (GlcNAc...) asparagine glycosylation is found at asparagine 469 and asparagine 551. Histidine 562 is a binding site for Zn(2+). Asparagine 606 and asparagine 630 each carry an N-linked (GlcNAc...) asparagine glycan.

It belongs to the peptidase M28 family. M28B subfamily. Zn(2+) is required as a cofactor.

Its subcellular location is the membrane. It carries out the reaction Release of an unsubstituted, C-terminal glutamyl residue, typically from Ac-Asp-Glu or folylpoly-gamma-glutamates.. This Caenorhabditis briggsae protein is Glutamate carboxypeptidase 2 homolog.